The primary structure comprises 233 residues: Ribonuclease 3 (233 aa).

Positions 8–135 constitute an RNase III domain; that stretch reads AQRFLEDKQL…VIGAIYLDQG (128 aa). Glu48 lines the Mg(2+) pocket. Asp52 is a catalytic residue. Mg(2+) contacts are provided by Asp121 and Glu124. Residue Glu124 is part of the active site. A DRBM domain is found at 161 to 230; the sequence is DYKSKLQELV…AQKVLQDNLV (70 aa).

The protein belongs to the ribonuclease III family. Homodimer. Mg(2+) is required as a cofactor.

The protein resides in the cytoplasm. The catalysed reaction is Endonucleolytic cleavage to 5'-phosphomonoester.. In terms of biological role, digests double-stranded RNA. Involved in the processing of primary rRNA transcript to yield the immediate precursors to the large and small rRNAs (23S and 16S). Processes some mRNAs, and tRNAs when they are encoded in the rRNA operon. Processes pre-crRNA and tracrRNA of type II CRISPR loci if present in the organism. The chain is Ribonuclease 3 from Syntrophomonas wolfei subsp. wolfei (strain DSM 2245B / Goettingen).